Here is a 476-residue protein sequence, read N- to C-terminus: Ribulose bisphosphate carboxylase large chain (476 aa).

Asparagine 124 and threonine 174 together coordinate substrate. Catalysis depends on lysine 176, which acts as the Proton acceptor. Substrate is bound at residue lysine 178. 3 residues coordinate Mg(2+): lysine 202, aspartate 204, and glutamate 205. N6-carboxylysine is present on lysine 202. Histidine 295 serves as the catalytic Proton acceptor. Residues arginine 296, histidine 328, and serine 380 each contribute to the substrate site.

The protein belongs to the RuBisCO large chain family. Type I subfamily. In terms of assembly, heterohexadecamer of 8 large chains and 8 small chains; disulfide-linked. The disulfide link is formed within the large subunit homodimers. Forms complexes of many stoichiometries with Raf1 with and without RbcS. RuBisCO interacts with the C-terminus of CcmM. Requires Mg(2+) as cofactor. Post-translationally, the disulfide bond which can form in the large chain dimeric partners within the hexadecamer appears to be associated with oxidative stress and protein turnover.

Its subcellular location is the carboxysome. The enzyme catalyses 2 (2R)-3-phosphoglycerate + 2 H(+) = D-ribulose 1,5-bisphosphate + CO2 + H2O. The catalysed reaction is D-ribulose 1,5-bisphosphate + O2 = 2-phosphoglycolate + (2R)-3-phosphoglycerate + 2 H(+). In terms of biological role, ruBisCO catalyzes two reactions: the carboxylation of D-ribulose 1,5-bisphosphate, the primary event in carbon dioxide fixation, as well as the oxidative fragmentation of the pentose substrate in the photorespiration process. Both reactions occur simultaneously and in competition at the same active site. The protein is Ribulose bisphosphate carboxylase large chain of Nostoc sp. (strain PCC 7120 / SAG 25.82 / UTEX 2576).